The following is a 394-amino-acid chain: Probable peptidoglycan glycosyltransferase FtsW (394 aa).

Residues 1 to 27 (MEFLQNIKKNYDEWTRITPQGLLYDRA) are Cytoplasmic-facing. A helical membrane pass occupies residues 28–48 (LFWLFVILLLIGLVAVTSASI). Over 49-66 (PYSSRLFNDPFYFAKRDA) the chain is Periplasmic. Residues 67–87 (IYVLLSLLTCYISLQISSSQW) traverse the membrane as a helical segment. The Cytoplasmic portion of the chain corresponds to 88 to 93 (EKWHAK). A helical transmembrane segment spans residues 94-114 (IFLFSVILLLLVPFIGTSVNG). Residues 115-120 (AKRWIS) are Periplasmic-facing. The helical transmembrane segment at 121–141 (LGILNFQPAEFAKLALTCFLA) threads the bilayer. Residues 142-155 (SYFTRRYDEVRSRH) lie on the Cytoplasmic side of the membrane. A run of 2 helical transmembrane segments spans residues 156–176 (VSIFKPFIVMLVLGCFLLLQP) and 177–197 (DLGSTVVLFIIMSGMLFIVGA). Residue K198 is a topological domain, cytoplasmic. A helical transmembrane segment spans residues 199–219 (ILQFVGLIALGGILFVWLVLT). Residues 220–277 (ASYRLKRFIGFLEPFKEPYGTGFQLTNSLIAFGRGEITGEGLGNSIQKLDYLPEAHTD) are Periplasmic-facing. The chain crosses the membrane as a helical span at residues 278 to 298 (FIMAIIGEEFGFIGILIVILL). Over 299-322 (LGLLIFRAMKIGRESLMLEQRFRG) the chain is Cytoplasmic. Residues 323–343 (FFALGIGFWIFFQGFVNLGMA) traverse the membrane as a helical segment. The Periplasmic portion of the chain corresponds to 344 to 353 (LGMLPTKGLT). The chain crosses the membrane as a helical span at residues 354-374 (FPLVSYGGSSIIIMSATIGIL). At 375–394 (LRIDHENRLFRIGQARLRDD) the chain is on the cytoplasmic side.

This sequence belongs to the SEDS family. FtsW subfamily.

It localises to the cell inner membrane. It carries out the reaction [GlcNAc-(1-&gt;4)-Mur2Ac(oyl-L-Ala-gamma-D-Glu-L-Lys-D-Ala-D-Ala)](n)-di-trans,octa-cis-undecaprenyl diphosphate + beta-D-GlcNAc-(1-&gt;4)-Mur2Ac(oyl-L-Ala-gamma-D-Glu-L-Lys-D-Ala-D-Ala)-di-trans,octa-cis-undecaprenyl diphosphate = [GlcNAc-(1-&gt;4)-Mur2Ac(oyl-L-Ala-gamma-D-Glu-L-Lys-D-Ala-D-Ala)](n+1)-di-trans,octa-cis-undecaprenyl diphosphate + di-trans,octa-cis-undecaprenyl diphosphate + H(+). Its pathway is cell wall biogenesis; peptidoglycan biosynthesis. Peptidoglycan polymerase that is essential for cell division. The sequence is that of Probable peptidoglycan glycosyltransferase FtsW from Haemophilus influenzae (strain ATCC 51907 / DSM 11121 / KW20 / Rd).